Here is a 272-residue protein sequence, read N- to C-terminus: ATP phosphoribosyltransferase regulatory subunit (272 aa).

The protein belongs to the class-II aminoacyl-tRNA synthetase family. HisZ subfamily. In terms of assembly, heteromultimer composed of HisG and HisZ subunits.

It is found in the cytoplasm. The protein operates within amino-acid biosynthesis; L-histidine biosynthesis; L-histidine from 5-phospho-alpha-D-ribose 1-diphosphate: step 1/9. Functionally, required for the first step of histidine biosynthesis. May allow the feedback regulation of ATP phosphoribosyltransferase activity by histidine. The chain is ATP phosphoribosyltransferase regulatory subunit from Staphylococcus aureus (strain MRSA252).